Reading from the N-terminus, the 159-residue chain is Methyl-coenzyme M reductase operon protein D (159 aa).

In terms of assembly, MCR is composed of three subunits: alpha, beta, and gamma. The function of proteins C and D is not known.

The chain is Methyl-coenzyme M reductase operon protein D (mcrD) from Methanococcus voltae.